The following is a 117-amino-acid chain: G antigen 4 (117 aa).

The segment at 1–117 (MSWRGRSTYY…PEEGEKQSQC (117 aa)) is disordered. Acidic residues-rich tracts occupy residues 32–45 (FSDEVEPATPEEGE) and 87–96 (ECEDGPDGQE). The segment covering 103-117 (EEVKTPEEGEKQSQC) has biased composition (basic and acidic residues).

Belongs to the GAGE family. Expressed in a variety of tumor tissues but not in normal tissues, except testis.

Antigen, recognized on melanoma by autologous cytolytic T-lymphocytes. The protein is G antigen 4 of Homo sapiens (Human).